The following is a 341-amino-acid chain: Small ribosomal subunit protein uS3 (341 aa).

The KH type-2 domain maps to 38–106 (IRRMMTRGME…QVQLNILEVK (69 aa)). Disordered regions lie at residues 224-246 (RAVRGRSARREQPAAESPALETA) and 274-341 (PAGQ…TKEG). Low complexity-rich tracts occupy residues 285–303 (AEQPVVTAEPAAAAAVTGE) and 311–333 (AAPAEPTTSAAAEEAPGGADAPS).

This sequence belongs to the universal ribosomal protein uS3 family. In terms of assembly, part of the 30S ribosomal subunit. Forms a tight complex with proteins S10 and S14.

In terms of biological role, binds the lower part of the 30S subunit head. Binds mRNA in the 70S ribosome, positioning it for translation. The sequence is that of Small ribosomal subunit protein uS3 from Acidothermus cellulolyticus (strain ATCC 43068 / DSM 8971 / 11B).